A 318-amino-acid polypeptide reads, in one-letter code: S-adenosylmethionine/S-adenosylhomocysteine transporter (318 aa).

Transmembrane regions (helical) follow at residues Phe-7–Trp-27, Leu-44–Phe-64, Val-76–Ile-96, Lys-105–Leu-125, Leu-134–Glu-154, Leu-163–Leu-183, Ser-193–Ala-213, Leu-231–Phe-251, Phe-262–Leu-282, and Ser-285–Tyr-305. The EamA 1 domain maps to Phe-25–Leu-148. In terms of domain architecture, EamA 2 spans Cys-191 to Ile-304.

It belongs to the drug/metabolite transporter (DMT) superfamily. 10 TMS drug/metabolite exporter (DME) (TC 2.A.7.3) family.

It localises to the cell membrane. Transports S-adenosylmethionine (SAM) and S-adenosylhomocysteine (SAH). Allows bacteria to acquire SAM from the eukaryotic host cell and to likely remove the toxic by-product SAH. In Chlamydia muridarum (strain MoPn / Nigg), this protein is S-adenosylmethionine/S-adenosylhomocysteine transporter.